The chain runs to 995 residues: Translation initiation factor IF-2 (995 aa).

Residues 53–399 (NNAGSPAPAA…SGAPRGQGQV (347 aa)) form a disordered region. Composition is skewed to pro residues over residues 60 to 87 (PAAPPAVAPPTPTPTPPRTPTPAPPPGG) and 104 to 119 (TPGPKPKGPVPGPPQS). A compositionally biased stretch (low complexity) spans 135 to 160 (AAAEARAAALKAEQEAAVKAAQAARQ). A compositionally biased stretch (basic and acidic residues) spans 161–171 (QQRENVRREPP). Pro residues predominate over residues 177–192 (RPGPRPGPGTMPPRPG). Residues 193–202 (SPAAGRSGAP) are compositionally biased toward low complexity. 2 stretches are compositionally biased toward pro residues: residues 203–213 (APGPGPRPGGR) and 242–264 (RPSPASMPPRPSPASMPPRPSPA). A compositionally biased stretch (gly residues) spans 273–363 (RPGGPGSGRP…GAAGAFGRPG (91 aa)). Residues 367–376 (TRGRKSKKQR) are compositionally biased toward basic residues. The tr-type G domain maps to 486–658 (SRPPVVTVMG…VLLTADASLE (173 aa)). Residues 495–502 (GHVDHGKT) are G1. 495 to 502 (GHVDHGKT) serves as a coordination point for GTP. Residues 520 to 524 (GITQH) are G2. The G3 stretch occupies residues 545 to 548 (DTPG). Residues 545–549 (DTPGH) and 599–602 (NKID) each bind GTP. The segment at 599–602 (NKID) is G4. The segment at 635–637 (AAK) is G5.

Belongs to the TRAFAC class translation factor GTPase superfamily. Classic translation factor GTPase family. IF-2 subfamily.

Its subcellular location is the cytoplasm. In terms of biological role, one of the essential components for the initiation of protein synthesis. Protects formylmethionyl-tRNA from spontaneous hydrolysis and promotes its binding to the 30S ribosomal subunits. Also involved in the hydrolysis of GTP during the formation of the 70S ribosomal complex. In Salinispora arenicola (strain CNS-205), this protein is Translation initiation factor IF-2.